The following is a 120-amino-acid chain: MFLLYEYDLFWAFLIISSLIPILAFFISGVLAPISKGPEKLSTYESGIEPMGDAWLQFRIRYYMFALVFVVFDVETVFLYPWAMSFDVLGVSVFIEAFIFVLILIGGLVYAWRKGALEWS.

The next 3 membrane-spanning stretches (helical) occupy residues 10–30 (FWAF…ISGV), 64–84 (MFAL…PWAM), and 88–108 (VLGV…IGGL).

Belongs to the complex I subunit 3 family. NDH is composed of at least 16 different subunits, 5 of which are encoded in the nucleus.

It localises to the plastid. Its subcellular location is the chloroplast thylakoid membrane. The catalysed reaction is a plastoquinone + NADH + (n+1) H(+)(in) = a plastoquinol + NAD(+) + n H(+)(out). It catalyses the reaction a plastoquinone + NADPH + (n+1) H(+)(in) = a plastoquinol + NADP(+) + n H(+)(out). In terms of biological role, NDH shuttles electrons from NAD(P)H:plastoquinone, via FMN and iron-sulfur (Fe-S) centers, to quinones in the photosynthetic chain and possibly in a chloroplast respiratory chain. The immediate electron acceptor for the enzyme in this species is believed to be plastoquinone. Couples the redox reaction to proton translocation, and thus conserves the redox energy in a proton gradient. This is NAD(P)H-quinone oxidoreductase subunit 3, chloroplastic from Ipomoea purpurea (Common morning glory).